Reading from the N-terminus, the 450-residue chain is Ribosomal protein uS12 methylthiotransferase RimO (450 aa).

The region spanning 9–124 is the MTTase N-terminal domain; it reads NRINVVTLGC…LLSALEADYK (116 aa). [4Fe-4S] cluster-binding residues include Cys18, Cys53, Cys87, Cys148, Cys152, and Cys155. The Radical SAM core domain maps to 134–365; the sequence is TTPKNYAYLK…EIQSQISWEL (232 aa). The TRAM domain occupies 367–434; sequence QQKIGEVFNV…DFDLYGEPLN (68 aa).

Belongs to the methylthiotransferase family. RimO subfamily. It depends on [4Fe-4S] cluster as a cofactor.

Its subcellular location is the cytoplasm. The catalysed reaction is L-aspartate(89)-[ribosomal protein uS12]-hydrogen + (sulfur carrier)-SH + AH2 + 2 S-adenosyl-L-methionine = 3-methylsulfanyl-L-aspartate(89)-[ribosomal protein uS12]-hydrogen + (sulfur carrier)-H + 5'-deoxyadenosine + L-methionine + A + S-adenosyl-L-homocysteine + 2 H(+). Its function is as follows. Catalyzes the methylthiolation of an aspartic acid residue of ribosomal protein uS12. In Christiangramia forsetii (strain DSM 17595 / CGMCC 1.15422 / KT0803) (Gramella forsetii), this protein is Ribosomal protein uS12 methylthiotransferase RimO.